The following is a 378-amino-acid chain: Rhodopsin (378 aa).

The Extracellular segment spans residues 1–53 (MMSIASGPSHAAYTWTAQGGGFGNQTVVDKVPPEMLHLVDAHWYQFPPMNPLW). N-linked (GlcNAc...) asparagine glycosylation occurs at N24. A helical membrane pass occupies residues 54-78 (HAILGFVIGILGMISVIGNGMVIYI). Residues 79-90 (FTTTKSLRTPSN) lie on the Cytoplasmic side of the membrane. The chain crosses the membrane as a helical span at residues 91–115 (LLVINLAISDFLMMLSMSPAMVINC). At 116–130 (YYETWVLGPLVCELY) the chain is on the extracellular side. C127 and C204 are joined by a disulfide. The helical transmembrane segment at 131–150 (GLTGSLFGCGSIWTMTMIAF) threads the bilayer. The Cytoplasmic portion of the chain corresponds to 151–169 (DRYNVIVKGLSAKPMTING). The helical transmembrane segment at 170-193 (ALLRILGIWFFSLGWTIAPMFGWN) threads the bilayer. Over 194–217 (RYVPEGNMTACGTDYLTKDLLSRS) the chain is Extracellular. Residue N200 is glycosylated (N-linked (GlcNAc...) asparagine). A helical transmembrane segment spans residues 218 to 245 (YILVYSFFCYFLPLFLIIYSYFFIIQAV). Over 246-280 (AAHEKNMREQAKKMNVASLRSAENQSTSAECKLAK) the chain is Cytoplasmic. The helical transmembrane segment at 281 to 304 (VALMTISLWFMAWTPYLVINYAGI) threads the bilayer. The Extracellular portion of the chain corresponds to 305–311 (FETVKIN). A helical membrane pass occupies residues 312–336 (PLFTIWGSLFAKANAVYNPIVYGIS). K323 is subject to N6-(retinylidene)lysine. Over 337-378 (HPKYRAALFQRFPSLACSSGPAGADTLSTTTTVTEGTEKPAA) the chain is Cytoplasmic. Residues 356–378 (GPAGADTLSTTTTVTEGTEKPAA) form a disordered region. The segment covering 362–371 (TLSTTTTVTE) has biased composition (low complexity).

It belongs to the G-protein coupled receptor 1 family. Opsin subfamily. Post-translationally, phosphorylated on some or all of the serine and threonine residues present in the C-terminal region.

It is found in the membrane. Its function is as follows. Visual pigments are the light-absorbing molecules that mediate vision. They consist of an apoprotein, opsin, covalently linked to cis-retinal. This Cataglyphis bombycina (Saharan silver ant) protein is Rhodopsin.